A 408-amino-acid polypeptide reads, in one-letter code: Aminomethyltransferase, mitochondrial (408 aa).

The N-terminal 30 residues, 1–30, are a transit peptide targeting the mitochondrion; sequence MRGGGLWQLGQSVTRRLAQAEKKVIARRCF. Substrate contacts are provided by glutamate 235, arginine 266, and tyrosine 404.

This sequence belongs to the GcvT family. As to quaternary structure, the glycine cleavage system is composed of four proteins: P, T, L and H.

The protein localises to the mitochondrion. It catalyses the reaction N(6)-[(R)-S(8)-aminomethyldihydrolipoyl]-L-lysyl-[protein] + (6S)-5,6,7,8-tetrahydrofolate = N(6)-[(R)-dihydrolipoyl]-L-lysyl-[protein] + (6R)-5,10-methylene-5,6,7,8-tetrahydrofolate + NH4(+). Functionally, the glycine cleavage system catalyzes the degradation of glycine. This Mesembryanthemum crystallinum (Common ice plant) protein is Aminomethyltransferase, mitochondrial (GDCST).